We begin with the raw amino-acid sequence, 1025 residues long: Multidrug resistance protein MdtC (1025 aa).

Helical transmembrane passes span 3 to 23 (FFALFIYRPVATILLSVAITL), 333 to 353 (EVEQTLIISVALVILVVFLFL), 360 to 380 (IIPAVAVPVSLIGTFAAMYLC), 387 to 407 (LSLMALTIATGFVVDDAIVVL), 431 to 451 (VGFTVLSMSLSLVAVFLPLLL), 463 to 483 (FAVTLSVAIGISLLVSLTLTP), 528 to 548 (LVGVVLLGTIALNIWLYISIP), 853 to 873 (VILIIAAIATVYIVLGILYES), 875 to 895 (VHPLTILSTLPSAGVGALLAL), 897 to 917 (LFNAPFSLIALIGIMLLIGIV), 953 to 973 (PIMMTTLAALFGALPLVLSGG), and 984 to 1004 (ITIVGGLVMSQLLTLYTTPVV).

This sequence belongs to the resistance-nodulation-cell division (RND) (TC 2.A.6) family. MdtC subfamily. In terms of assembly, part of a tripartite efflux system composed of MdtA, MdtB and MdtC. MdtC forms a heteromultimer with MdtB.

The protein localises to the cell inner membrane. The MdtABC tripartite complex confers resistance against novobiocin and deoxycholate. This Escherichia coli O7:K1 (strain IAI39 / ExPEC) protein is Multidrug resistance protein MdtC.